The primary structure comprises 434 residues: Nuclear receptor subfamily 1 group I member 2 (434 aa).

Positions 38–107 (PQICRVCGDK…RLRKCLESGM (70 aa)) form a DNA-binding region, nuclear receptor. 2 consecutive NR C4-type zinc fingers follow at residues 41–61 (CRVCGDKATGYHFNVMTCEGC) and 77–102 (CPFRKGACEITRKTRRQCQACRLRKC). A Bipartite nuclear localization signal motif is present at residues 66–92 (RRAMKRNARLRCPFRKGACEITRKTRR). Positions 108–145 (KKEMIMSDAAVEERRALIKRKKRERIGTQPPGVQGLTE) are hinge. The NR LBD domain maps to 146 to 433 (EQRMMIRELM…LMQELFGITG (288 aa)). Hyperforin contacts are provided by residues Ser-247, 285–288 (QLRF), and His-407.

The protein belongs to the nuclear hormone receptor family. NR1 subfamily. As to quaternary structure, heterodimer with RXRA. Interacts with NCOA1. Interacts (via domain NR LBD) with CRY1 and CRY2 in a ligand-dependent manner.

It is found in the nucleus. Its function is as follows. Nuclear receptor that binds and is activated by a variety of endogenous and xenobiotic compounds. Transcription factor that activates the transcription of multiple genes involved in the metabolism and secretion of potentially harmful xenobiotics, endogenous compounds and drugs. Response to specific ligands is species-specific, due to differences in the ligand-binding domain. Activated by naturally occurring steroids, such as pregnenolone and progesterone. Binds to a response element in the promoters of the CYP3A4 and ABCB1/MDR1 genes. The polypeptide is Nuclear receptor subfamily 1 group I member 2 (NR1I2) (Macaca mulatta (Rhesus macaque)).